The chain runs to 152 residues: 3-hydroxyacyl-[acyl-carrier-protein] dehydratase FabZ (152 aa).

The active site involves H57.

It belongs to the thioester dehydratase family. FabZ subfamily.

The protein localises to the cytoplasm. It catalyses the reaction a (3R)-hydroxyacyl-[ACP] = a (2E)-enoyl-[ACP] + H2O. Involved in unsaturated fatty acids biosynthesis. Catalyzes the dehydration of short chain beta-hydroxyacyl-ACPs and long chain saturated and unsaturated beta-hydroxyacyl-ACPs. This chain is 3-hydroxyacyl-[acyl-carrier-protein] dehydratase FabZ, found in Bradyrhizobium sp. (strain BTAi1 / ATCC BAA-1182).